We begin with the raw amino-acid sequence, 816 residues long: Leucine--tRNA ligase (816 aa).

The 'HIGH' region signature appears at 40-51 (SYPSGSQLHAGH). The 'KMSKS' region motif lies at 576–580 (KMSKS). Lysine 579 lines the ATP pocket.

The protein belongs to the class-I aminoacyl-tRNA synthetase family.

The protein resides in the cytoplasm. The enzyme catalyses tRNA(Leu) + L-leucine + ATP = L-leucyl-tRNA(Leu) + AMP + diphosphate. The chain is Leucine--tRNA ligase from Clostridium perfringens (strain 13 / Type A).